The sequence spans 216 residues: Protein Syd (216 aa).

The protein belongs to the Syd family.

It is found in the cell inner membrane. Functionally, interacts with the SecY protein in vivo. May bind preferentially to an uncomplexed state of SecY, thus functioning either as a chelating agent for excess SecY in the cell or as a regulatory factor that negatively controls the translocase function. In Shewanella baltica (strain OS223), this protein is Protein Syd.